We begin with the raw amino-acid sequence, 692 residues long: Single-strand DNA endonuclease ASTE1 (692 aa).

It belongs to the asteroid family.

Functionally, structure-specific DNA endonuclease that specifically cleaves single-stranded DNA and 3' overhang DNA. This is Single-strand DNA endonuclease ASTE1 (aste1a) from Danio rerio (Zebrafish).